Here is a 377-residue protein sequence, read N- to C-terminus: GTP 3',8-cyclase (377 aa).

Positions 1–29 (MTTRLYLSPTPPRNDREGASKSTSASIKH) are disordered. The Radical SAM core domain maps to 45 to 271 (RFGRIARDLR…FTLSPAKEPR (227 aa)). Residue R54 participates in GTP binding. Positions 61 and 65 each coordinate [4Fe-4S] cluster. An S-adenosyl-L-methionine-binding site is contributed by Y67. C68 is a binding site for [4Fe-4S] cluster. R105 serves as a coordination point for GTP. S-adenosyl-L-methionine is bound at residue G109. Residue T140 participates in GTP binding. S164 contacts S-adenosyl-L-methionine. K201 contributes to the GTP binding site. M235 contacts S-adenosyl-L-methionine. [4Fe-4S] cluster is bound by residues C304 and C307. 309 to 311 (RSR) contributes to the GTP binding site. Residue C321 coordinates [4Fe-4S] cluster.

It belongs to the radical SAM superfamily. MoaA family. Monomer and homodimer. [4Fe-4S] cluster serves as cofactor.

It carries out the reaction GTP + AH2 + S-adenosyl-L-methionine = (8S)-3',8-cyclo-7,8-dihydroguanosine 5'-triphosphate + 5'-deoxyadenosine + L-methionine + A + H(+). It functions in the pathway cofactor biosynthesis; molybdopterin biosynthesis. Its function is as follows. Catalyzes the cyclization of GTP to (8S)-3',8-cyclo-7,8-dihydroguanosine 5'-triphosphate. This is GTP 3',8-cyclase from Corynebacterium glutamicum (strain R).